The chain runs to 191 residues: MAFRMSEQPRTIKIYNLLAGTNEFIGEGDAYIPPHTGLPANSTDIAPPDIPAGFVAVFNSDESSWHLVEDHRGKTVYDVASGNALFISELGPLPENVTWLSPEGEFQKWNGTAWVKDTEAEKLFRIREAEETKNNLMQVASEHIAPLQDAADLEIATEEEISLLEAWKKYRVLLNRVDTSTAQDIEWPALP.

It belongs to the tfa family.

The protein is Prophage tail fiber assembly protein homolog TfaR (tfaR) of Escherichia coli (strain K12).